The primary structure comprises 496 residues: Costunolide synthase (496 aa).

The helical; Signal-anchor for type II membrane protein transmembrane segment at Phe-4–Ala-24 threads the bilayer. 4 N-linked (GlcNAc...) asparagine glycosylation sites follow: Asn-26, Asn-168, Asn-280, and Asn-412. Cys-434 lines the heme pocket.

This sequence belongs to the cytochrome P450 family. The cofactor is heme. Expressed in floral glandular trichomes.

It is found in the membrane. It catalyses the reaction germacra-1(10),4,11(13)-trien-12-oate + reduced [NADPH--hemoprotein reductase] + O2 = (+)-costunolide + oxidized [NADPH--hemoprotein reductase] + 2 H2O. The protein operates within secondary metabolite biosynthesis; terpenoid biosynthesis. Functionally, involved in the biosynthesis of germacrene-derived sesquiterpene lactones. Component of the parthenolide biosynthetic pathway; parthenolide and conjugates are promising anti-cancer drugs highly active against colon cancer cells. Hydroxylates germacrene A acid to 6-alpha-hydroxy-germacrene A acid, a precursor of sesquiterpene lactones that spontaneously undergoes a lactonization which yields costunolide. In Tanacetum parthenium (Feverfew), this protein is Costunolide synthase.